A 331-amino-acid polypeptide reads, in one-letter code: Cathepsin 7 (331 aa).

Positions 1–17 (MTVAVFLAILCLRAALA) are cleaved as a signal peptide. Residues 18 to 111 (APRPDYSLDA…GKHIQKRNVK (94 aa)) constitute a propeptide, activation peptide. The Nuclear localization signal signature appears at 33-50 (KRNNAKTYSPEEEKQRRA). Asparagine 72 carries an N-linked (GlcNAc...) asparagine glycan. 3 disulfide bridges follow: cysteine 133-cysteine 176, cysteine 167-cysteine 209, and cysteine 267-cysteine 320. The active site involves cysteine 136. Active-site residues include histidine 274 and asparagine 298.

Belongs to the peptidase C1 family.

It localises to the endosome. The protein resides in the lysosome. It is found in the cytoplasm. The protein localises to the perinuclear region. Its subcellular location is the golgi apparatus. It localises to the nucleus. The protein resides in the secreted. It is found in the extracellular space. Involved in trophoblast cell proliferation and differentiation probably by affecting mitotic cell cycle progression. Proteolytic activity and nuclear localization are essential for its role in cell cycle progression. The chain is Cathepsin 7 (Cts7) from Rattus norvegicus (Rat).